The primary structure comprises 33 residues: Cytochrome b6-f complex subunit 8 (33 aa).

A helical membrane pass occupies residues 2–22 (LFTFAWASLAAIFTFSIAMVV).

Belongs to the PetN family. As to quaternary structure, the 4 large subunits of the cytochrome b6-f complex are cytochrome b6, subunit IV (17 kDa polypeptide, PetD), cytochrome f and the Rieske protein, while the 4 small subunits are PetG, PetL, PetM and PetN. The complex functions as a dimer.

The protein localises to the cellular thylakoid membrane. Component of the cytochrome b6-f complex, which mediates electron transfer between photosystem II (PSII) and photosystem I (PSI), cyclic electron flow around PSI, and state transitions. In Prochlorococcus marinus (strain MIT 9211), this protein is Cytochrome b6-f complex subunit 8.